The primary structure comprises 195 residues: Imidazoleglycerol-phosphate dehydratase (195 aa).

Belongs to the imidazoleglycerol-phosphate dehydratase family.

The protein localises to the cytoplasm. It catalyses the reaction D-erythro-1-(imidazol-4-yl)glycerol 3-phosphate = 3-(imidazol-4-yl)-2-oxopropyl phosphate + H2O. Its pathway is amino-acid biosynthesis; L-histidine biosynthesis; L-histidine from 5-phospho-alpha-D-ribose 1-diphosphate: step 6/9. The protein is Imidazoleglycerol-phosphate dehydratase of Burkholderia mallei (strain NCTC 10247).